The primary structure comprises 422 residues: uncharacterized protein (422 aa).

It belongs to the N(4)/N(6)-methyltransferase family.

The enzyme catalyses a 2'-deoxyadenosine in DNA + S-adenosyl-L-methionine = an N(6)-methyl-2'-deoxyadenosine in DNA + S-adenosyl-L-homocysteine + H(+). This is an uncharacterized protein from Mycoplasma pneumoniae (strain ATCC 29342 / M129 / Subtype 1) (Mycoplasmoides pneumoniae).